A 400-amino-acid polypeptide reads, in one-letter code: tRNA-specific 2-thiouridylase MnmA (400 aa).

Residues 19 to 26 (AMSGGVDS) and Leu45 each bind ATP. The active-site Nucleophile is Cys113. An intrachain disulfide couples Cys113 to Cys210. Residue Gly137 participates in ATP binding. The segment at 160-162 (RDQ) is interaction with tRNA. The Cysteine persulfide intermediate role is filled by Cys210.

This sequence belongs to the MnmA/TRMU family.

The protein localises to the cytoplasm. It catalyses the reaction S-sulfanyl-L-cysteinyl-[protein] + uridine(34) in tRNA + AH2 + ATP = 2-thiouridine(34) in tRNA + L-cysteinyl-[protein] + A + AMP + diphosphate + H(+). Its function is as follows. Catalyzes the 2-thiolation of uridine at the wobble position (U34) of tRNA, leading to the formation of s(2)U34. The protein is tRNA-specific 2-thiouridylase MnmA of Rhodopseudomonas palustris (strain BisB18).